The following is a 105-amino-acid chain: UPF0145 protein Mevan_1624 (105 aa).

The protein belongs to the UPF0145 family.

The polypeptide is UPF0145 protein Mevan_1624 (Methanococcus vannielii (strain ATCC 35089 / DSM 1224 / JCM 13029 / OCM 148 / SB)).